The primary structure comprises 270 residues: tRNA pseudouridine synthase A (270 aa).

Asp60 serves as the catalytic Nucleophile. The interval 107-111 is RNA binding; the sequence is FHARF. A substrate-binding site is contributed by Tyr118. The tract at residues 168-172 is interaction with tRNA; sequence QCQSR.

Belongs to the tRNA pseudouridine synthase TruA family. As to quaternary structure, homodimer.

It carries out the reaction uridine(38/39/40) in tRNA = pseudouridine(38/39/40) in tRNA. Its function is as follows. Formation of pseudouridine at positions 38, 39 and 40 in the anticodon stem and loop of transfer RNAs. This chain is tRNA pseudouridine synthase A, found in Enterobacter sp. (strain 638).